Here is a 115-residue protein sequence, read N- to C-terminus: Large ribosomal subunit protein eL30 (115 aa).

Phosphoserine occurs at positions 10 and 16. Lys26 bears the N6-acetyllysine; alternate mark. Lys26 participates in a covalent cross-link: Glycyl lysine isopeptide (Lys-Gly) (interchain with G-Cter in SUMO2); alternate.

It belongs to the eukaryotic ribosomal protein eL30 family. As to quaternary structure, component of the large ribosomal subunit.

The protein resides in the cytoplasm. Functionally, component of the large ribosomal subunit. The ribosome is a large ribonucleoprotein complex responsible for the synthesis of proteins in the cell. The sequence is that of Large ribosomal subunit protein eL30 (RPL30) from Oryctolagus cuniculus (Rabbit).